The sequence spans 326 residues: ATP phosphoribosyltransferase regulatory subunit (326 aa).

Belongs to the class-II aminoacyl-tRNA synthetase family. HisZ subfamily. As to quaternary structure, heteromultimer composed of HisG and HisZ subunits.

It localises to the cytoplasm. Its pathway is amino-acid biosynthesis; L-histidine biosynthesis; L-histidine from 5-phospho-alpha-D-ribose 1-diphosphate: step 1/9. Required for the first step of histidine biosynthesis. May allow the feedback regulation of ATP phosphoribosyltransferase activity by histidine. In Streptococcus thermophilus (strain ATCC BAA-491 / LMD-9), this protein is ATP phosphoribosyltransferase regulatory subunit.